Consider the following 404-residue polypeptide: Ubiquitin-like modifier-activating enzyme 5 (404 aa).

S45 carries the phosphoserine modification. Residues G83, D104, K127, N150, and N184 each contribute to the ATP site. 2 residues coordinate Zn(2+): C226 and C229. The Glycyl thioester intermediate role is filled by C250. Residues C303 and C308 each contribute to the Zn(2+) site. Residues 334-346 (IIHEDNEWGIELV) carry the UFM1-interacting sequence (UIS) motif. Positions 347–377 (SEVSEEELKNFSGPVPDLPEGITVAYTIPKK) are linker. S358 and S393 each carry phosphoserine. The UFC1-binding sequence (UFC) signature appears at 389–404 (DSGESLEDLMAKMKNM).

The protein belongs to the ubiquitin-activating E1 family. UBA5 subfamily. As to quaternary structure, homodimer; homodimerization is required for UFM1 activation. Interacts (via UIS motif) with UFM1; binds UFM1 via a trans-binding mechanism in which UFM1 interacts with distinct sites in both subunits of the UBA5 homodimer. Interacts (via C-terminus) with UFC1. Interacts (via UIS motif) with GABARAPL2 and, with lower affinity, with GABARAP and GABARAPL1. As to expression, widely expressed.

Its subcellular location is the cytoplasm. It localises to the nucleus. It is found in the endoplasmic reticulum membrane. The protein resides in the golgi apparatus. Functionally, E1-like enzyme which specifically catalyzes the first step in ufmylation. Activates UFM1 by first adenylating its C-terminal glycine residue with ATP, and thereafter linking this residue to the side chain of a cysteine residue in E1, yielding a UFM1-E1 thioester and free AMP. Activates UFM1 via a trans-binding mechanism, in which UFM1 interacts with distinct sites in both subunits of the UBA5 homodimer. Trans-binding also promotes stabilization of the UBA5 homodimer, and enhances ATP-binding. Transfer of UFM1 from UBA5 to the E2-like enzyme UFC1 also takes place using a trans mechanism. Ufmylation plays a key role in various processes, such as ribosome recycling, response to DNA damage, interferon response or reticulophagy (also called ER-phagy). Ufmylation is essential for erythroid differentiation of both megakaryocytes and erythrocytes. The sequence is that of Ubiquitin-like modifier-activating enzyme 5 from Homo sapiens (Human).